The following is a 507-amino-acid chain: Sulfatase (507 aa).

Positions 1–18 (MKTRYFLLLGICMLSCRT) are cleaved as a signal peptide. Ca(2+)-binding residues include Asp39, Asp40, and Cys79. Cys79 (nucleophile) is an active-site residue. Cys79 bears the 3-oxoalanine (Cys) mark. His139 is an active-site residue. Ca(2+) is bound by residues Asp325 and His326.

The protein belongs to the sulfatase family. It depends on Ca(2+) as a cofactor. The conversion to 3-oxoalanine (also known as C-formylglycine, FGly), of a serine or cysteine residue in prokaryotes and of a cysteine residue in eukaryotes, is critical for catalytic activity. This post-translational modification is severely defective in multiple sulfatase deficiency (MSD).

It localises to the periplasm. Functionally, sulfatase that may be involved in ulvan degradation. Ulvan is the main polysaccharide component of the Ulvales (green seaweed) cell wall. It is composed of disaccharide building blocks comprising 3-sulfated rhamnose (Rha3S) linked to D-glucuronic acid (GlcA), L-iduronic acid (IduA), or D-xylose (Xyl). Has no activity on different ulvan polymers. In Formosa agariphila (strain DSM 15362 / KCTC 12365 / LMG 23005 / KMM 3901 / M-2Alg 35-1), this protein is Sulfatase.